We begin with the raw amino-acid sequence, 136 residues long: Transcription antitermination protein NusB (136 aa).

The protein belongs to the NusB family.

Its function is as follows. Involved in transcription antitermination. Required for transcription of ribosomal RNA (rRNA) genes. Binds specifically to the boxA antiterminator sequence of the ribosomal RNA (rrn) operons. This is Transcription antitermination protein NusB from Pseudarthrobacter chlorophenolicus (strain ATCC 700700 / DSM 12829 / CIP 107037 / JCM 12360 / KCTC 9906 / NCIMB 13794 / A6) (Arthrobacter chlorophenolicus).